Here is a 54-residue protein sequence, read N- to C-terminus: Putative ankyrin repeat protein RC0701 (54 aa).

The ANK repeat unit spans residues 17–46 (SGKTPLDWYSDYNATKIVETLIKNGGNVSS).

The polypeptide is Putative ankyrin repeat protein RC0701 (Rickettsia conorii (strain ATCC VR-613 / Malish 7)).